A 587-amino-acid polypeptide reads, in one-letter code: Bifunctional lycopene cyclase/phytoene synthase (587 aa).

Residues 1 to 242 are lycopene beta-cyclase; sequence MGYDYALVHV…IVFGIAAFDK (242 aa). Helical transmembrane passes span 8-28, 35-55, 77-97, 120-140, 150-170, 172-192, and 220-240; these read VHVK…YPVF, RTLF…SYLI, AEEL…YIIL, GKLV…WLIA, LILV…AHFL, ALPL…LWIV, and IEEA…IAAF. A phytoene synthase region spans residues 249–587; it reads AFPEKFDKPA…WVAWSTLMAA (339 aa).

It in the N-terminal section; belongs to the lycopene beta-cyclase family. In the C-terminal section; belongs to the phytoene/squalene synthase family.

The protein resides in the membrane. It carries out the reaction all-trans-lycopene = gamma-carotene. It catalyses the reaction gamma-carotene = all-trans-beta-carotene. The enzyme catalyses 2 (2E,6E,10E)-geranylgeranyl diphosphate = 15-cis-phytoene + 2 diphosphate. It participates in carotenoid biosynthesis; beta-carotene biosynthesis. The protein operates within carotenoid biosynthesis; phytoene biosynthesis; all-trans-phytoene from geranylgeranyl diphosphate: step 1/1. Functionally, bifunctional enzyme that catalyzes the reactions from geranylgeranyl diphosphate to phytoene (phytoene synthase) and lycopene to beta-carotene via the intermediate gamma-carotene (lycopene cyclase). The chain is Bifunctional lycopene cyclase/phytoene synthase from Colletotrichum graminicola (strain M1.001 / M2 / FGSC 10212) (Maize anthracnose fungus).